We begin with the raw amino-acid sequence, 485 residues long: NADH-quinone oxidoreductase subunit N (485 aa).

Transmembrane regions (helical) follow at residues 8 to 28, 35 to 55, 71 to 91, 105 to 125, 127 to 147, 159 to 179, 203 to 223, 235 to 255, 271 to 291, 297 to 317, 326 to 346, 373 to 393, 408 to 430, and 455 to 475; these read LIAL…MLSI, FLNA…LWFV, GFAM…CTFA, FYLL…ANHL, SLFL…GYAF, YTIL…LVYA, LLAG…LVPF, PAPV…GVVM, VVLA…ALSQ, LLGY…IALQ, VGVY…VVSL, AAVM…LGFI, WWLV…RVAV, and IVVL…QPLI.

Belongs to the complex I subunit 2 family. As to quaternary structure, NDH-1 is composed of 13 different subunits. Subunits NuoA, H, J, K, L, M, N constitute the membrane sector of the complex.

It localises to the cell inner membrane. The enzyme catalyses a quinone + NADH + 5 H(+)(in) = a quinol + NAD(+) + 4 H(+)(out). NDH-1 shuttles electrons from NADH, via FMN and iron-sulfur (Fe-S) centers, to quinones in the respiratory chain. The immediate electron acceptor for the enzyme in this species is believed to be ubiquinone. Couples the redox reaction to proton translocation (for every two electrons transferred, four hydrogen ions are translocated across the cytoplasmic membrane), and thus conserves the redox energy in a proton gradient. The sequence is that of NADH-quinone oxidoreductase subunit N from Escherichia coli O81 (strain ED1a).